Here is a 98-residue protein sequence, read N- to C-terminus: Small ribosomal subunit protein bTHXm (98 aa).

The transit peptide at 1–35 directs the protein to the mitochondrion; sequence MAAMQWCGAMTRRIMMTQRTSAALNCSARYSSLSP. The disordered stretch occupies residues 52–71; it reads DKKTKKGKRFKGSYGNSRGK. The span at 53-62 shows a compositional bias: basic residues; the sequence is KKTKKGKRFK.

This sequence belongs to the bacterial ribosomal protein bTHX family. In terms of assembly, component of the mitochondrial ribosome small subunit.

It localises to the mitochondrion. The protein is Small ribosomal subunit protein bTHXm of Arabidopsis thaliana (Mouse-ear cress).